The following is a 1028-amino-acid chain: Serine/threonine-protein kinase fray2 (1028 aa).

Residues 1–67 (MSDDKYHHDK…PKPRKNYPNS (67 aa)) form a disordered region. Positions 20 to 54 (KQSTAAALSSSSTLASSSSMTTTTTTTSTTTTAAS) are enriched in low complexity. The Protein kinase domain occupies 71 to 330 (YELKETIGKG…PSKLLEHRFF (260 aa)). ATP is bound by residues 77-85 (IGKGGSGLV) and K100. The Proton acceptor role is filled by D195. A Phosphothreonine; by autocatalysis modification is found at T230. Residues 368 to 381 (TSSPQFDTGHSNSA) are compositionally biased toward polar residues. Disordered regions lie at residues 368-467 (TSSP…STVV), 486-561 (AYHQ…LQQP), and 580-914 (DLIT…IQSK). Low complexity-rich tracts occupy residues 387 to 419 (PNEN…NNNN) and 432 to 458 (TPSH…SNHT). 2 stretches are compositionally biased toward polar residues: residues 503 to 518 (IPNH…SAHS) and 528 to 542 (IHPT…VVNN). A compositionally biased stretch (low complexity) spans 543 to 561 (TQQPQTLQPPQQQHQLQQP). Residues 595–616 (IPSSSSHGNIPSLVTTSPKSPL) show a composition bias toward polar residues. Low complexity-rich tracts occupy residues 617–642 (QHQQ…ISSN) and 683–700 (SSRA…SHTS). Composition is skewed to basic and acidic residues over residues 701 to 714 (SSDE…SDRK), 728 to 742 (SKRD…DRSN), 753 to 855 (VSRD…DRSR), and 865 to 893 (SRDS…DYKS).

The protein belongs to the protein kinase superfamily. STE Ser/Thr protein kinase family. STE20 subfamily. Mn(2+) serves as cofactor. Undergoes autophosphorylation in the catalytic domain.

The enzyme catalyses L-seryl-[protein] + ATP = O-phospho-L-seryl-[protein] + ADP + H(+). The catalysed reaction is L-threonyl-[protein] + ATP = O-phospho-L-threonyl-[protein] + ADP + H(+). The polypeptide is Serine/threonine-protein kinase fray2 (Dictyostelium discoideum (Social amoeba)).